A 409-amino-acid chain; its full sequence is Phosphoglycerate kinase (409 aa).

Residues 23-25, 63-66, Arg120, and Arg160 contribute to the substrate site; these read DIN and HQSR. Residues Glu333 and 359–362 contribute to the ATP site; that span reads GGHL.

Belongs to the phosphoglycerate kinase family. In terms of assembly, monomer.

Its subcellular location is the cytoplasm. It catalyses the reaction (2R)-3-phosphoglycerate + ATP = (2R)-3-phospho-glyceroyl phosphate + ADP. It functions in the pathway carbohydrate degradation; glycolysis; pyruvate from D-glyceraldehyde 3-phosphate: step 2/5. The polypeptide is Phosphoglycerate kinase (pgk) (Methanobacterium bryantii).